Consider the following 358-residue polypeptide: Uroporphyrinogen decarboxylase (358 aa).

Substrate contacts are provided by residues 28–32 (RQAGR), aspartate 78, tyrosine 154, serine 208, and histidine 324.

It belongs to the uroporphyrinogen decarboxylase family. Homodimer.

The protein resides in the cytoplasm. It carries out the reaction uroporphyrinogen III + 4 H(+) = coproporphyrinogen III + 4 CO2. It participates in porphyrin-containing compound metabolism; protoporphyrin-IX biosynthesis; coproporphyrinogen-III from 5-aminolevulinate: step 4/4. Functionally, catalyzes the decarboxylation of four acetate groups of uroporphyrinogen-III to yield coproporphyrinogen-III. The protein is Uroporphyrinogen decarboxylase of Acidiphilium cryptum (strain JF-5).